Reading from the N-terminus, the 228-residue chain is Ribonuclease 3 (228 aa).

An RNase III domain is found at 5–128 (LNRLMARLGY…IIGAMLLDGG (124 aa)). E41 serves as a coordination point for Mg(2+). The active site involves D45. D114 and E117 together coordinate Mg(2+). E117 is a catalytic residue. Positions 155–225 (DAKTRLQEWL…ASLALEWLEQ (71 aa)) constitute a DRBM domain.

Belongs to the ribonuclease III family. Homodimer. Mg(2+) is required as a cofactor.

Its subcellular location is the cytoplasm. It catalyses the reaction Endonucleolytic cleavage to 5'-phosphomonoester.. Its function is as follows. Digests double-stranded RNA. Involved in the processing of primary rRNA transcript to yield the immediate precursors to the large and small rRNAs (23S and 16S). Processes some mRNAs, and tRNAs when they are encoded in the rRNA operon. Processes pre-crRNA and tracrRNA of type II CRISPR loci if present in the organism. The sequence is that of Ribonuclease 3 from Alcanivorax borkumensis (strain ATCC 700651 / DSM 11573 / NCIMB 13689 / SK2).